We begin with the raw amino-acid sequence, 212 residues long: Large ribosomal subunit protein mL48 (212 aa).

The N-terminal 28 residues, 1–28, are a transit peptide targeting the mitochondrion; sequence MSGTLEKVLCLRNNTIFKQAFSLLRFRT. Position 199 is an N6-succinyllysine (Lys-199).

It belongs to the mitochondrion-specific ribosomal protein mL48 family. Component of the mitochondrial large ribosomal subunit (mt-LSU). Mature mammalian 55S mitochondrial ribosomes consist of a small (28S) and a large (39S) subunit. The 28S small subunit contains a 12S ribosomal RNA (12S mt-rRNA) and 30 different proteins. The 39S large subunit contains a 16S rRNA (16S mt-rRNA), a copy of mitochondrial valine transfer RNA (mt-tRNA(Val)), which plays an integral structural role, and 52 different proteins. mL48 is located at the central protuberance. Interacts with OXA1L.

The protein resides in the mitochondrion. The polypeptide is Large ribosomal subunit protein mL48 (MRPL48) (Homo sapiens (Human)).